Consider the following 93-residue polypeptide: Cobalt transport protein CbiN (93 aa).

The next 2 helical transmembrane spans lie at leucine 5–glycine 25 and leucine 63–alanine 83.

Belongs to the CbiN family. As to quaternary structure, forms an energy-coupling factor (ECF) transporter complex composed of an ATP-binding protein (A component, CbiO), a transmembrane protein (T component, CbiQ) and 2 possible substrate-capture proteins (S components, CbiM and CbiN) of unknown stoichimetry.

The protein localises to the cell inner membrane. Its pathway is cofactor biosynthesis; adenosylcobalamin biosynthesis. In terms of biological role, part of the energy-coupling factor (ECF) transporter complex CbiMNOQ involved in cobalt import. This chain is Cobalt transport protein CbiN, found in Klebsiella pneumoniae (strain 342).